Here is a 484-residue protein sequence, read N- to C-terminus: Serine protease HTR4 (484 aa).

Residues 1 to 28 (MARPLQRPAGLGPFVLLWLLLPAPSGRG) form the signal peptide. One can recognise an IGFBP N-terminal domain in the interval 36 to 114 (PVPRCPAACE…GRPLGTCGCP (79 aa)). 8 cysteine pairs are disulfide-bonded: Cys-40–Cys-66, Cys-44–Cys-68, Cys-49–Cys-69, Cys-55–Cys-72, Cys-80–Cys-94, Cys-88–Cys-111, Cys-113–Cys-132, and Cys-121–Cys-157. One can recognise a Kazal-like domain in the interval 105-159 (GRPLGTCGCPAAGATVCGSDGRTYRSLCALRAENRAARLRGALPAVPVQKGDCGD). Residues 209-369 (ASGFIVSEDG…IPSDRIRQFL (161 aa)) form a serine protease region. Active-site charge relay system residues include His-225, Asp-255, and Ser-333. The 83-residue stretch at 390–472 (LRMLPLTMNL…LSLLVRRKSQ (83 aa)) folds into the PDZ domain.

This sequence belongs to the peptidase S1C family.

It is found in the secreted. In terms of biological role, serine protease. In Bos taurus (Bovine), this protein is Serine protease HTR4 (HTRA4).